A 177-amino-acid polypeptide reads, in one-letter code: MAELTTIARPYAKAAFDVAVEHNAVDTWAEMLTFAALVSENETMQPLLTGSLASTKLAALFISVCGEQINEQGQNLIKVMAENGRLKVLPAVSELFAQYRNEWAKEVEADVVSAAELSSEQKQQISISLEKRLARKVKLNCSTDAALIAGVIIKAGDLVIDGSVRGKLSRLSEKLQS.

The protein belongs to the ATPase delta chain family. In terms of assembly, F-type ATPases have 2 components, F(1) - the catalytic core - and F(0) - the membrane proton channel. F(1) has five subunits: alpha(3), beta(3), gamma(1), delta(1), epsilon(1). F(0) has three main subunits: a(1), b(2) and c(10-14). The alpha and beta chains form an alternating ring which encloses part of the gamma chain. F(1) is attached to F(0) by a central stalk formed by the gamma and epsilon chains, while a peripheral stalk is formed by the delta and b chains.

Its subcellular location is the cell inner membrane. Functionally, f(1)F(0) ATP synthase produces ATP from ADP in the presence of a proton or sodium gradient. F-type ATPases consist of two structural domains, F(1) containing the extramembraneous catalytic core and F(0) containing the membrane proton channel, linked together by a central stalk and a peripheral stalk. During catalysis, ATP synthesis in the catalytic domain of F(1) is coupled via a rotary mechanism of the central stalk subunits to proton translocation. Its function is as follows. This protein is part of the stalk that links CF(0) to CF(1). It either transmits conformational changes from CF(0) to CF(1) or is implicated in proton conduction. The polypeptide is ATP synthase subunit delta (Shewanella sp. (strain MR-4)).